Consider the following 296-residue polypeptide: MQDRFLKSIAKLPEPLATAIVPLLDKDFAGHIDAQQLEVLQIASKMELNELLLALLPIAAALARPPISEFHVGAIAKGKSGDIYMGANIELPGEALFHSVHAEQSAISHAWLSGESIIEDIIVNASPCGHCRQFINELVDGSKVKIHLPAQKIEPLAHYLPYAFGPSDLNITEPLLTKQQHTLTLDSNDPMIIEALDHAGLSYAPYTKNYASVVLETKDGATYCGRYAENAAFNPSMQPMQMALSTMARHNRDFSEINRAVLIESSKGVISLVGAAMDALHSVAVVELEHIVVEPE.

2 consecutive CMP/dCMP-type deaminase domains span residues 47 to 167 (ELNE…FGPS) and 186 to 296 (DSND…VEPE). 88–90 (NIE) lines the substrate pocket. Residue His101 coordinates Zn(2+). Catalysis depends on Glu103, which acts as the Proton donor. Zn(2+)-binding residues include Cys128 and Cys131.

It belongs to the cytidine and deoxycytidylate deaminase family. Homodimer. It depends on Zn(2+) as a cofactor.

It carries out the reaction cytidine + H2O + H(+) = uridine + NH4(+). It catalyses the reaction 2'-deoxycytidine + H2O + H(+) = 2'-deoxyuridine + NH4(+). This enzyme scavenges exogenous and endogenous cytidine and 2'-deoxycytidine for UMP synthesis. This Shewanella halifaxensis (strain HAW-EB4) protein is Cytidine deaminase.